Reading from the N-terminus, the 398-residue chain is MTGANRHYVLAAGGTGGHLLPAFALAAELDRRGHHVALITDERGAKIPGKPDFLPAHVIPAGRFGKNPLRWVGGLRAVWKGREMAKRLFESFQPSAVVGFGGYPALPAMLAASREDIPSIIHEQNAVLGRVNRLQAGRVSAIATAYPEIQRLKPKHAEKIHLVGNPVRAGVLSLRDEPFPPFTEDGLLKVLVTGGSQGASVLSQIVPDGLAMLPPALRQRLQVTQQCRPEDLDTVRERYKTHDIPAELGSYFEDMAARLADAHLFIGRAGASTIAELTAVGRPAILVPLPIATDDHQAHNTREVVKAGGARMIRQEKFTPKELAKQIQALGQRPDTLATAAHAAWNCGRPKAVEDLADLVESFGGADMMDVIKVGGNNARAASQGVAVGQGAAKERAE.

Residues 15–17, asparagine 125, arginine 168, serine 196, and glutamine 297 contribute to the UDP-N-acetyl-alpha-D-glucosamine site; that span reads TGG.

Belongs to the glycosyltransferase 28 family. MurG subfamily.

The protein resides in the cell inner membrane. It catalyses the reaction di-trans,octa-cis-undecaprenyl diphospho-N-acetyl-alpha-D-muramoyl-L-alanyl-D-glutamyl-meso-2,6-diaminopimeloyl-D-alanyl-D-alanine + UDP-N-acetyl-alpha-D-glucosamine = di-trans,octa-cis-undecaprenyl diphospho-[N-acetyl-alpha-D-glucosaminyl-(1-&gt;4)]-N-acetyl-alpha-D-muramoyl-L-alanyl-D-glutamyl-meso-2,6-diaminopimeloyl-D-alanyl-D-alanine + UDP + H(+). It participates in cell wall biogenesis; peptidoglycan biosynthesis. Functionally, cell wall formation. Catalyzes the transfer of a GlcNAc subunit on undecaprenyl-pyrophosphoryl-MurNAc-pentapeptide (lipid intermediate I) to form undecaprenyl-pyrophosphoryl-MurNAc-(pentapeptide)GlcNAc (lipid intermediate II). In Erythrobacter litoralis (strain HTCC2594), this protein is UDP-N-acetylglucosamine--N-acetylmuramyl-(pentapeptide) pyrophosphoryl-undecaprenol N-acetylglucosamine transferase.